Consider the following 431-residue polypeptide: Glutamate--tRNA ligase 2 (431 aa).

A 'HIGH' region motif is present at residues 6–16 (PSPTGDMHIGN). The 'KMSKS' region motif lies at 235-239 (KMSKR). Lysine 238 contributes to the ATP binding site.

It belongs to the class-I aminoacyl-tRNA synthetase family. Glutamate--tRNA ligase type 1 subfamily. As to quaternary structure, monomer.

The protein resides in the cytoplasm. The enzyme catalyses tRNA(Glu) + L-glutamate + ATP = L-glutamyl-tRNA(Glu) + AMP + diphosphate. Functionally, catalyzes the attachment of glutamate to tRNA(Glu) in a two-step reaction: glutamate is first activated by ATP to form Glu-AMP and then transferred to the acceptor end of tRNA(Glu). The sequence is that of Glutamate--tRNA ligase 2 from Campylobacter jejuni subsp. doylei (strain ATCC BAA-1458 / RM4099 / 269.97).